We begin with the raw amino-acid sequence, 166 residues long: Regulatory protein RecX (166 aa).

Belongs to the RecX family.

Its subcellular location is the cytoplasm. Modulates RecA activity. The protein is Regulatory protein RecX of Escherichia coli (strain SE11).